Reading from the N-terminus, the 498-residue chain is UDP-N-acetylmuramate--L-alanine ligase (498 aa).

133 to 139 (GSSGKTT) serves as a coordination point for ATP.

This sequence belongs to the MurCDEF family.

It localises to the cytoplasm. The catalysed reaction is UDP-N-acetyl-alpha-D-muramate + L-alanine + ATP = UDP-N-acetyl-alpha-D-muramoyl-L-alanine + ADP + phosphate + H(+). The protein operates within cell wall biogenesis; peptidoglycan biosynthesis. Cell wall formation. The sequence is that of UDP-N-acetylmuramate--L-alanine ligase from Wolbachia pipientis wMel.